The primary structure comprises 189 residues: UPF0301 protein CTA_0231 (189 aa).

Belongs to the UPF0301 (AlgH) family.

This chain is UPF0301 protein CTA_0231, found in Chlamydia trachomatis serovar A (strain ATCC VR-571B / DSM 19440 / HAR-13).